A 510-amino-acid chain; its full sequence is Alpha-L-arabinofuranosidase B (510 aa).

The first 24 residues, 1 to 24, serve as a signal peptide directing secretion; it reads MTMSRSSRSSVLALALATGSLVAA. The tract at residues 25–342 is catalytic; that stretch reads GPCDIYSSGG…ADIVAAKYAT (318 aa). 3 disulfides stabilise this stretch: C27/C37, C87/C92, and C182/C183. N-linked (GlcNAc...) asparagine glycosylation occurs at N89. Residue D225 participates in substrate binding. The active-site Nucleophile is the E227. Substrate is bound by residues N228 and G303. D304 serves as the catalytic Proton donor. Residues 343-510 form an ABD region; it reads TSLISGPALT…VSWVVADGFA (168 aa). C412 and C450 are disulfide-bonded. 8 residues coordinate substrate: H427, N429, F430, D446, H475, E477, L480, and D500.

This sequence belongs to the glycosyl hydrolase 54 family.

It is found in the secreted. The catalysed reaction is Hydrolysis of terminal non-reducing alpha-L-arabinofuranoside residues in alpha-L-arabinosides.. The protein operates within glycan metabolism; L-arabinan degradation. Functionally, alpha-L-arabinofuranosidase involved in the degradation of arabinoxylan, a major component of plant hemicellulose. Able to hydrolyze 1,5-, 1,3- and 1,2-alpha-linkages not only in L-arabinofuranosyl oligosaccharides, but also in polysaccharides containing terminal non-reducing L-arabinofuranoses in side chains, like L-arabinan, arabinogalactan and arabinoxylan. In Emericella nidulans (strain FGSC A4 / ATCC 38163 / CBS 112.46 / NRRL 194 / M139) (Aspergillus nidulans), this protein is Alpha-L-arabinofuranosidase B (abfB).